The sequence spans 200 residues: LexA repressor (200 aa).

A DNA-binding region (H-T-H motif) is located at residues 28–48 (RAEIAQHFGFSSPNAAEQHLK). Catalysis depends on for autocatalytic cleavage activity residues serine 117 and lysine 154.

It belongs to the peptidase S24 family. Homodimer.

It catalyses the reaction Hydrolysis of Ala-|-Gly bond in repressor LexA.. Its function is as follows. Represses a number of genes involved in the response to DNA damage (SOS response), including recA and lexA. In the presence of single-stranded DNA, RecA interacts with LexA causing an autocatalytic cleavage which disrupts the DNA-binding part of LexA, leading to derepression of the SOS regulon and eventually DNA repair. The sequence is that of LexA repressor from Thiobacillus denitrificans (strain ATCC 25259 / T1).